Here is a 581-residue protein sequence, read N- to C-terminus: Zinc finger protein 319 (581 aa).

Residues 1-22 (MSESWQQPPQTQPQQPQAPQPQ) show a composition bias toward low complexity. Positions 1–39 (MSESWQQPPQTQPQQPQAPQPQHHAETPPALAEHTLPPG) are disordered. The C2H2-type 1 zinc-finger motif lies at 75–99 (PKCGVCGHDLAHLSSPHEHQCLAGH). Residues 103–125 (FQCTQCLKIFHQATDLLEHQCVQ) form a C2H2-type 2; degenerate zinc finger. Residue Lys129 forms a Glycyl lysine isopeptide (Lys-Gly) (interchain with G-Cter in SUMO2) linkage. 4 C2H2-type zinc fingers span residues 131 to 153 (FVCG…HSSH), 201 to 223 (YSCP…ERIH), 229 to 251 (YKCT…KRTH), and 257 to 279 (YKCA…MYAH). Ser280 is subject to Phosphoserine. A C2H2-type 7; degenerate zinc finger spans residues 286–308 (FRCNVCELHFKESSELLQHPCTP). 3 consecutive C2H2-type zinc fingers follow at residues 314-336 (FRCG…ERTH), 342-364 (FKCD…RRTH), and 370-392 (FKCG…QHVH). A C2H2-type 11; degenerate zinc finger spans residues 398 to 420 (FKCPVCQKGFDQSAELLRHKCLP). The C2H2-type 12 zinc finger occupies 427–449 (FKCPVCNKAYKRASALQKHQLSH). A C2H2-type 13; degenerate zinc finger spans residues 457–479 (LRCTLCERRFFSSSEFVQHRCDP). C2H2-type zinc fingers lie at residues 485-507 (LKCP…RRVH), 513-535 (YKCP…QGVH), and 541-563 (FKCV…SAQH).

The protein belongs to the krueppel C2H2-type zinc-finger protein family.

It is found in the nucleus. Functionally, may be involved in transcriptional regulation. This is Zinc finger protein 319 (Znf319) from Mus musculus (Mouse).